Here is a 372-residue protein sequence, read N- to C-terminus: 4-hydroxybenzoate polyprenyltransferase, mitochondrial (372 aa).

Residues 1–42 (MFIWQRKSILLGRSILGSGRVTVAGIIGSSRKRYTSSSSSSS) constitute a mitochondrion transit peptide. 7 helical membrane-spanning segments follow: residues 92-112 (PVGT…GAMM), 114-134 (GATL…ALVM), 171-191 (ALVF…LLPA), 193-213 (CWWL…FKRF), 229-249 (ALLG…PLYL), 298-318 (IALL…GFIG), and 352-372 (TGLY…FGFL).

Belongs to the UbiA prenyltransferase family. Mg(2+) serves as cofactor.

The protein resides in the mitochondrion inner membrane. It carries out the reaction an all-trans-polyprenyl diphosphate + 4-hydroxybenzoate = a 4-hydroxy-3-(all-trans-polyprenyl)benzoate + diphosphate. Its pathway is cofactor biosynthesis; ubiquinone biosynthesis. Its function is as follows. Catalyzes the prenylation of para-hydroxybenzoate (PHB) with an all-trans polyprenyl group. Mediates the second step in the final reaction sequence of coenzyme Q (CoQ) biosynthesis, which is the condensation of the polyisoprenoid side chain with PHB, generating the first membrane-bound Q intermediate. This is 4-hydroxybenzoate polyprenyltransferase, mitochondrial from Saccharomyces cerevisiae (strain ATCC 204508 / S288c) (Baker's yeast).